The sequence spans 217 residues: Uracil-DNA glycosylase (217 aa).

The Proton acceptor role is filled by aspartate 62.

It belongs to the uracil-DNA glycosylase (UDG) superfamily. UNG family.

It is found in the cytoplasm. It carries out the reaction Hydrolyzes single-stranded DNA or mismatched double-stranded DNA and polynucleotides, releasing free uracil.. In terms of biological role, excises uracil residues from the DNA which can arise as a result of misincorporation of dUMP residues by DNA polymerase or due to deamination of cytosine. The polypeptide is Uracil-DNA glycosylase (Streptococcus pneumoniae (strain Hungary19A-6)).